The following is a 416-amino-acid chain: uncharacterized protein (416 aa).

9 consecutive transmembrane segments (helical) span residues L5–L25, I84–V104, A128–I148, L160–W180, V192–F212, P237–L257, F263–L283, L288–T308, and I312–I332.

The protein belongs to the glycosyltransferase 83 family.

Its subcellular location is the cell membrane. This is an uncharacterized protein from Aquifex aeolicus (strain VF5).